Consider the following 290-residue polypeptide: Aquaporin-3 (290 aa).

Residues 1 to 24 lie on the Cytoplasmic side of the membrane; sequence MGRQKELVTRCGEMLHIRYRLLRQ. The chain crosses the membrane as a helical span at residues 25 to 42; sequence ALAECLGTLILVMFGCGS. Over 43-56 the chain is Extracellular; that stretch reads VAQVVLSRGTHGGF. Residues 57–74 traverse the membrane as a helical segment; it reads LTINLAFGFAVTLGILVA. Over 75-78 the chain is Cytoplasmic; the sequence is GQVS. The segment at residues 79 to 92 is an intramembrane region (discontinuously helical); that stretch reads GAHLNPAVTFAMCF. The NPA 1 signature appears at 83–85; the sequence is NPA. At 93 to 100 the chain is on the cytoplasmic side; the sequence is LAREPWIK. The helical transmembrane segment at 101–121 threads the bilayer; the sequence is LPVYTLAQTLGAFLGAGIIFG. Over 122–159 the chain is Extracellular; sequence LYYDAIWAFANNQLIVSGPNGTAGIFATYPSGHLDMVN. The N-linked (GlcNAc...) asparagine glycan is linked to Asn-141. A helical membrane pass occupies residues 160–177; the sequence is GFFDQFIGTASLIVCVLA. The Cytoplasmic segment spans residues 178–189; it reads IVDPNNNPVPRG. Residues 190-206 form a helical membrane-spanning segment; sequence LEAFTVGLVVLVIGTSM. At 207–210 the chain is on the extracellular side; that stretch reads GFNS. Residues 211–224 constitute an intramembrane region (discontinuously helical); that stretch reads GYAVNPARDFGPRL. The NPA 2 signature appears at 215-217; that stretch reads NPA. The Extracellular segment spans residues 225–242; sequence FTAIAGWGSEVFTTGRHW. The helical transmembrane segment at 243 to 264 threads the bilayer; sequence WWVPIASPLLGSIAGVFVYQLM. The Cytoplasmic portion of the chain corresponds to 265–290; the sequence is IGCHLEPPPPSTDEENVKLSQVKHKE.

The protein belongs to the MIP/aquaporin (TC 1.A.8) family. As to quaternary structure, homotetramer; each monomer provides an independent glycerol/water pore. Could also exist in other oligomeric states. As to expression, highly expressed in stomach and spleen, with lower expression in kidney and lung.

Its subcellular location is the cell membrane. It is found in the basolateral cell membrane. The enzyme catalyses glycerol(in) = glycerol(out). It catalyses the reaction H2O(in) = H2O(out). The catalysed reaction is urea(in) = urea(out). It carries out the reaction H2O2(out) = H2O2(in). Aquaglyceroporins form homotetrameric transmembrane channels, with each monomer independently mediating glycerol and water transport across the plasma membrane along their osmotic gradient. Could also be permeable to urea. Also participates in cell permeability to H2O2 and H2O2-mediated signaling. In skin, transports glycerol to the epidermis and stratum corneum, where it maintains hydration, elasticity, and supports lipid biosynthesis for barrier repair. In kidney, contributes to the reabsorption of water, helping the body maintain proper fluid balance. This chain is Aquaporin-3, found in Sus scrofa (Pig).